The primary structure comprises 274 residues: Elongation factor Ts (274 aa).

The tract at residues 79-82 (TDFV) is involved in Mg(2+) ion dislocation from EF-Tu.

This sequence belongs to the EF-Ts family.

It is found in the cytoplasm. In terms of biological role, associates with the EF-Tu.GDP complex and induces the exchange of GDP to GTP. It remains bound to the aminoacyl-tRNA.EF-Tu.GTP complex up to the GTP hydrolysis stage on the ribosome. The polypeptide is Elongation factor Ts (Aster yellows witches'-broom phytoplasma (strain AYWB)).